Here is a 356-residue protein sequence, read N- to C-terminus: Chavicol O-methyltransferase (356 aa).

The S-adenosyl-L-methionine site is built by Gly-202, Asp-225, Asp-245, Met-246, and Lys-259. His-263 acts as the Proton acceptor in catalysis.

It belongs to the class I-like SAM-binding methyltransferase superfamily. Cation-independent O-methyltransferase family. COMT subfamily. Homodimer. Specifically expressed in the peltate glandular trichomes on the surface of the young basil leaves.

The catalysed reaction is (E)-isoeugenol + S-adenosyl-L-methionine = (E)-isomethyleugenol + S-adenosyl-L-homocysteine + H(+). Its pathway is aromatic compound metabolism; phenylpropanoid biosynthesis. Its function is as follows. Phenylpropene O-methyltransferase that catalyzes the methylation of the para-4-hydroxyl of chavicol to methylchavicol. Can also convert eugenol to methyleugenol but with less affinity. The protein is Chavicol O-methyltransferase (CVOMT1) of Ocimum basilicum (Sweet basil).